We begin with the raw amino-acid sequence, 295 residues long: (R)-phenoxypropionate/alpha-ketoglutarate-dioxygenase (295 aa).

2 residues coordinate Fe cation: histidine 111 and aspartate 113. 2-oxoglutarate is bound by residues threonine 138 and tryptophan 255. Histidine 270 serves as a coordination point for Fe cation. Arginine 281 serves as a coordination point for 2-oxoglutarate.

Belongs to the TfdA dioxygenase family. As to quaternary structure, homotrimer. Fe cation serves as cofactor. Requires L-ascorbate as cofactor.

The enzyme catalyses (R)-2-(4-chloro-2-methylphenoxy)propanoate + 2-oxoglutarate + O2 = 2-methyl-4-chlorophenol + pyruvate + succinate + CO2. It catalyses the reaction (R)-(2,4-dichlorophenoxy)propanoate + 2-oxoglutarate + O2 = 2,4-dichlorophenol + pyruvate + succinate + CO2. It participates in xenobiotic degradation; 2-(2,4-dichlorophenoxy)propanoate degradation. With respect to regulation, inhibited by divalent cations, most significantly by copper and nickel, and by diethylpyrocarbonate (DEPC). Functionally, involved in the degradation of the phenoxypropionate herbicides. Catalyzes the enantiospecific cleavage of the ether bond in the herbicid R-dichlorprop ((R)-2-(2,4-dichlorophenoxy)propionate)(R-2,4-DP) and R-mecoprop ((R)-2-(4-chloro-2-methylphenoxy)propionate)(R-2,4-MCPP). It can also accept (RS)-2-(2,4,5-trichlorophenoxy)propionate, (RS)-2-(4-chlorophenoxy)propionate, (RS)-2-(m-chlorophenoxy)propionate, however it can only accept 2-oxoglutarate as oxygen acceptor. This chain is (R)-phenoxypropionate/alpha-ketoglutarate-dioxygenase, found in Delftia acidovorans (Pseudomonas acidovorans).